An 83-amino-acid polypeptide reads, in one-letter code: uncharacterized protein (83 aa).

The helical transmembrane segment at 58–78 threads the bilayer; it reads AVLLWIAIIATLGNIVVVGVV.

It is found in the membrane. This is an uncharacterized protein from Homo sapiens (Human).